The chain runs to 80 residues: Acyl carrier protein (80 aa).

Residues 4–79 (ANVEQKVKNI…DAVNYITTHK (76 aa)) enclose the Carrier domain. At Ser-39 the chain carries O-(pantetheine 4'-phosphoryl)serine.

Belongs to the acyl carrier protein (ACP) family. In terms of processing, 4'-phosphopantetheine is transferred from CoA to a specific serine of apo-ACP by AcpS. This modification is essential for activity because fatty acids are bound in thioester linkage to the sulfhydryl of the prosthetic group.

The protein resides in the cytoplasm. Its pathway is lipid metabolism; fatty acid biosynthesis. In terms of biological role, carrier of the growing fatty acid chain in fatty acid biosynthesis. The chain is Acyl carrier protein from Anaeromyxobacter sp. (strain Fw109-5).